The following is a 400-amino-acid chain: NADH-ubiquinone oxidoreductase 49 kDa subunit (400 aa).

Belongs to the complex I 49 kDa subunit family.

The protein localises to the mitochondrion. It catalyses the reaction a ubiquinone + NADH + 5 H(+)(in) = a ubiquinol + NAD(+) + 4 H(+)(out). Core subunit of the mitochondrial membrane respiratory chain NADH dehydrogenase (Complex I) that is believed to belong to the minimal assembly required for catalysis. Complex I functions in the transfer of electrons from NADH to the respiratory chain. The immediate electron acceptor for the enzyme is believed to be ubiquinone. Component of the iron-sulfur (IP) fragment of the enzyme. Component of the iron-sulfur (IP) fragment of the enzyme. In Prototheca wickerhamii, this protein is NADH-ubiquinone oxidoreductase 49 kDa subunit (NAD7).